A 103-amino-acid polypeptide reads, in one-letter code: Small ribosomal subunit protein uS10 (103 aa).

This sequence belongs to the universal ribosomal protein uS10 family. In terms of assembly, part of the 30S ribosomal subunit.

Functionally, involved in the binding of tRNA to the ribosomes. The sequence is that of Small ribosomal subunit protein uS10 from Xanthomonas axonopodis pv. citri (strain 306).